Consider the following 568-residue polypeptide: PCNA-interacting partner (568 aa).

A disordered region spans residues Q442 to L555. Positions N488–P500 are enriched in polar residues. Residues A515–N527 are compositionally biased toward basic and acidic residues.

This sequence belongs to the PARI family.

It is found in the cytoplasm. It localises to the nucleus. Functionally, required to suppress inappropriate homologous recombination, thereby playing a central role DNA repair and in the maintenance of genomic stability. The polypeptide is PCNA-interacting partner (parpbp) (Danio rerio (Zebrafish)).